The primary structure comprises 338 residues: Malate dehydrogenase, mitochondrial (338 aa).

The N-terminal 24 residues, 1-24, are a transit peptide targeting the mitochondrion; the sequence is MLSALARPAGAALRRSFSTSAQNN. NAD(+) is bound by residues 31-37 and D57; that span reads GASGGIG. O-linked (GlcNAc) serine glycosylation occurs at S33. 2 positions are modified to N6-acetyllysine; alternate: K78 and K91. 2 positions are modified to N6-succinyllysine; alternate: K78 and K91. Positions 104 and 110 each coordinate substrate. NAD(+) contacts are provided by residues N117 and 140–142; that span reads IAN. N142 contributes to the substrate binding site. An N6-acetyllysine modification is found at K165. A substrate-binding site is contributed by R176. An N6-acetyllysine; alternate modification is found at K185. N6-succinyllysine; alternate is present on K185. The Proton acceptor role is filled by H200. K203 carries the N6-succinyllysine modification. K215 and K239 each carry N6-acetyllysine; alternate. N6-succinyllysine; alternate occurs at positions 215 and 239. K239 bears the N6-malonyllysine; alternate mark. The residue at position 246 (S246) is a Phosphoserine. M251 is an NAD(+) binding site. K269 bears the N6-succinyllysine mark. K296, K301, and K307 each carry N6-acetyllysine; alternate. N6-succinyllysine; alternate is present on residues K296, K301, and K307. K307 is subject to N6-malonyllysine; alternate. A Phosphothreonine modification is found at T309. N6-acetyllysine; alternate occurs at positions 314 and 324. N6-succinyllysine; alternate is present on residues K314 and K324. A Phosphoserine modification is found at S326. 3 positions are modified to N6-acetyllysine; alternate: K328, K329, and K335. K328 carries the N6-succinyllysine; alternate modification. K329 carries the post-translational modification N6-malonyllysine; alternate. An N6-succinyllysine; alternate modification is found at K335.

The protein belongs to the LDH/MDH superfamily. MDH type 1 family. As to quaternary structure, homodimer. Acetylation is enhanced after treatment either with trichostin A (TCA) or with nicotinamide (NAM) with the appearance of tri- and tetraacetylations. Glucose also increases acetylation. Acetylation of Lys-239 and Lys-314 is observed in liver mitochondria from fasted mice but not from fed mice.

Its subcellular location is the mitochondrion matrix. It carries out the reaction (S)-malate + NAD(+) = oxaloacetate + NADH + H(+). Its activity is regulated as follows. Enzyme activity is enhanced by acetylation. This Mus musculus (Mouse) protein is Malate dehydrogenase, mitochondrial (Mdh2).